We begin with the raw amino-acid sequence, 293 residues long: L-ornithine N(alpha)-acyltransferase (293 aa).

It belongs to the acetyltransferase family. OlsB subfamily.

It carries out the reaction a (3R)-hydroxyacyl-[ACP] + L-ornithine = a lyso-ornithine lipid + holo-[ACP] + H(+). The protein operates within lipid metabolism. Its function is as follows. Catalyzes the first step in the biosynthesis of ornithine lipids, which are phosphorus-free membrane lipids. Catalyzes the 3-hydroxyacyl-acyl carrier protein-dependent acylation of ornithine to form lyso-ornithine lipid (LOL). This chain is L-ornithine N(alpha)-acyltransferase, found in Agrobacterium fabrum (strain C58 / ATCC 33970) (Agrobacterium tumefaciens (strain C58)).